The following is a 475-amino-acid chain: Ribosomal RNA small subunit methyltransferase F (475 aa).

Residues 125–131 (AAAPGSK), Glu-149, Asp-176, and Asp-194 contribute to the S-adenosyl-L-methionine site. The Nucleophile role is filled by Cys-247.

It belongs to the class I-like SAM-binding methyltransferase superfamily. RsmB/NOP family.

The protein resides in the cytoplasm. It catalyses the reaction cytidine(1407) in 16S rRNA + S-adenosyl-L-methionine = 5-methylcytidine(1407) in 16S rRNA + S-adenosyl-L-homocysteine + H(+). In terms of biological role, specifically methylates the cytosine at position 1407 (m5C1407) of 16S rRNA. This Aeromonas hydrophila subsp. hydrophila (strain ATCC 7966 / DSM 30187 / BCRC 13018 / CCUG 14551 / JCM 1027 / KCTC 2358 / NCIMB 9240 / NCTC 8049) protein is Ribosomal RNA small subunit methyltransferase F.